The sequence spans 429 residues: Argininosuccinate lyase (429 aa).

This sequence belongs to the lyase 1 family. Argininosuccinate lyase subfamily.

The protein localises to the cytoplasm. The enzyme catalyses 2-(N(omega)-L-arginino)succinate = fumarate + L-arginine. The protein operates within amino-acid biosynthesis; L-arginine biosynthesis; L-arginine from L-ornithine and carbamoyl phosphate: step 3/3. This Pyrobaculum arsenaticum (strain DSM 13514 / JCM 11321 / PZ6) protein is Argininosuccinate lyase.